The chain runs to 279 residues: Four and a half LIM domains protein 2 (279 aa).

The C4-type zinc finger occupies 7–31 (CHHCNESLYGKKYILKEENPHCVAC). LIM zinc-binding domains lie at 40 to 92 (CEEC…CTDC), 101 to 153 (CQEC…CVPC), and 162 to 212 (CVQC…CLTC). Residue Lys-78 forms a Glycyl lysine isopeptide (Lys-Gly) (interchain with G-Cter in SUMO2) linkage. Glycyl lysine isopeptide (Lys-Gly) (interchain with G-Cter in SUMO2) cross-links involve residues Lys-167 and Lys-220. One can recognise an LIM zinc-binding 4 domain in the interval 221–275 (CAGCTNPISGLGGTKYISFEERQWHNDCFNCKKCSLSLVGRGFLTERDDILCPDC). At Ser-238 the chain carries Phosphoserine.

In terms of assembly, interacts with ZNF638 and TTN/titin. Interacts with E4F1. Interacts with GRB7. Interacts with SIRT1 and FOXO1. Interacts with CEFIP and calcineurin. Interacts with FOXK1. Expressed in heart only (at protein level).

It localises to the cytoplasm. It is found in the nucleus. The protein resides in the myofibril. The protein localises to the sarcomere. Its subcellular location is the z line. Its function is as follows. May function as a molecular transmitter linking various signaling pathways to transcriptional regulation. Negatively regulates the transcriptional repressor E4F1 and may function in cell growth. Inhibits the transcriptional activity of FOXO1 and its apoptotic function by enhancing the interaction of FOXO1 with SIRT1 and FOXO1 deacetylation. Negatively regulates the calcineurin/NFAT signaling pathway in cardiomyocytes. The chain is Four and a half LIM domains protein 2 (Fhl2) from Rattus norvegicus (Rat).